The sequence spans 598 residues: UvrABC system protein C (598 aa).

The 78-residue stretch at 14 to 91 (DQPGCYLMKD…IHKNNPKYNI (78 aa)) folds into the GIY-YIG domain. The 36-residue stretch at 196–231 (TEIQDRLQEKMAYAAAHMEFEKAAEFRDQIKAIETV) folds into the UVR domain.

Belongs to the UvrC family. In terms of assembly, interacts with UvrB in an incision complex.

It localises to the cytoplasm. The UvrABC repair system catalyzes the recognition and processing of DNA lesions. UvrC both incises the 5' and 3' sides of the lesion. The N-terminal half is responsible for the 3' incision and the C-terminal half is responsible for the 5' incision. The polypeptide is UvrABC system protein C (Enterococcus faecalis (strain ATCC 700802 / V583)).